Reading from the N-terminus, the 55-residue chain is Male-specific sperm protein Mst84Dc (55 aa).

This sequence belongs to the MST(3)CGP family. Testis.

The chain is Male-specific sperm protein Mst84Dc (Mst84Dc) from Drosophila melanogaster (Fruit fly).